We begin with the raw amino-acid sequence, 447 residues long: tRNA modification GTPase MnmE (447 aa).

(6S)-5-formyl-5,6,7,8-tetrahydrofolate-binding residues include arginine 22, glutamate 81, and lysine 121. Residues 217 to 373 (GIVLAITGET…LMSEIVSYAE (157 aa)) enclose the TrmE-type G domain. Residue asparagine 227 participates in K(+) binding. Residues 227–232 (NTGKSS), 246–252 (SDIPGTT), and 271–274 (DTAG) each bind GTP. Serine 231 is a Mg(2+) binding site. Positions 246, 248, and 251 each coordinate K(+). Threonine 252 contributes to the Mg(2+) binding site. Lysine 447 contacts (6S)-5-formyl-5,6,7,8-tetrahydrofolate.

The protein belongs to the TRAFAC class TrmE-Era-EngA-EngB-Septin-like GTPase superfamily. TrmE GTPase family. In terms of assembly, homodimer. Heterotetramer of two MnmE and two MnmG subunits. Requires K(+) as cofactor.

It localises to the cytoplasm. Functionally, exhibits a very high intrinsic GTPase hydrolysis rate. Involved in the addition of a carboxymethylaminomethyl (cmnm) group at the wobble position (U34) of certain tRNAs, forming tRNA-cmnm(5)s(2)U34. The protein is tRNA modification GTPase MnmE of Orientia tsutsugamushi (strain Boryong) (Rickettsia tsutsugamushi).